A 215-amino-acid chain; its full sequence is Pyrrolidone-carboxylate peptidase (215 aa).

Active-site residues include glutamate 81, cysteine 144, and histidine 168.

This sequence belongs to the peptidase C15 family. Homotetramer.

It is found in the cytoplasm. It carries out the reaction Release of an N-terminal pyroglutamyl group from a polypeptide, the second amino acid generally not being Pro.. In terms of biological role, removes 5-oxoproline from various penultimate amino acid residues except L-proline. This chain is Pyrrolidone-carboxylate peptidase, found in Bacillus velezensis (strain DSM 23117 / BGSC 10A6 / LMG 26770 / FZB42) (Bacillus amyloliquefaciens subsp. plantarum).